The following is a 317-amino-acid chain: OVARIAN TUMOR DOMAIN-containing deubiquitinating enzyme 4 (317 aa).

One can recognise an OTU domain in the interval 168-306 (YSIIGIPGDG…FGHYDALLLH (139 aa)). Residue aspartate 176 is part of the active site. Residue cysteine 179 is the Nucleophile of the active site. Histidine 299 is a catalytic residue.

It belongs to the peptidase C65 family.

Its subcellular location is the cytoplasm. The enzyme catalyses Thiol-dependent hydrolysis of ester, thioester, amide, peptide and isopeptide bonds formed by the C-terminal Gly of ubiquitin (a 76-residue protein attached to proteins as an intracellular targeting signal).. In terms of biological role, hydrolase that can remove conjugated ubiquitin from proteins in vitro and may therefore play an important regulatory role at the level of protein turnover by preventing degradation. Cysteine protease with a preference for 'Lys-63' over 'Lys-48'-linked over 'Met-1' ubiquitin (UB) tetramers (e.g. Ub3 and Ub4) as substrates. Also cleaves RUB-GST fusion. The chain is OVARIAN TUMOR DOMAIN-containing deubiquitinating enzyme 4 from Arabidopsis thaliana (Mouse-ear cress).